The chain runs to 641 residues: White-opaque regulator 3 (641 aa).

The span at 13-27 (ANVNHQQLSQDTNSI) shows a compositional bias: polar residues. 3 disordered regions span residues 13 to 38 (ANVN…QQQP), 146 to 245 (QLAS…PMTR), and 258 to 287 (PIIY…PEPR). Low complexity-rich tracts occupy residues 28–38 (PQQQLQQQQQP) and 151–160 (QNQDQNQSQN). A compositionally biased stretch (polar residues) spans 161–172 (RYEQSSMTSIHT). Positions 173 to 184 (NDNSSSVNNSPN) are enriched in low complexity. The segment covering 193–204 (STFQPQHSNEGS) has biased composition (polar residues). Composition is skewed to low complexity over residues 216-242 (QQQQ…PQQP) and 264-280 (SSNS…NSSS). A dksA C4-type zinc finger spans residues 317-337 (CRRCGSEIPLAERRFVLCPSC). 4 disordered regions span residues 366–409 (LSKE…KVCQ), 480–507 (MSHQ…PQPH), 522–550 (NSGV…HNGS), and 568–641 (LQLQ…YPNN). Residues 379–400 (QNNKSNEDQNNESRRGSQEKPA) are compositionally biased toward basic and acidic residues. Residues 486–495 (QPPPPPPPPL) are compositionally biased toward pro residues. A compositionally biased stretch (polar residues) spans 522 to 533 (NSGVAGIQQPNN). Residues 569–579 (QLQQQQQQQQQ) show a composition bias toward low complexity. Positions 597 to 606 (SFPPPPPPPL) are enriched in pro residues. Residues 610–641 (QHQGLQQYSHAQQQQQQQHQQQQPYHQEYPNN) show a composition bias toward low complexity.

The protein localises to the nucleus. Its function is as follows. Transcription factor that modulates the white-opaque switch. In Candida albicans (strain SC5314 / ATCC MYA-2876) (Yeast), this protein is White-opaque regulator 3 (WOR3).